Here is a 395-residue protein sequence, read N- to C-terminus: 1-deoxy-D-xylulose 5-phosphate reductoisomerase (395 aa).

Residues Thr-10, Gly-11, Ser-12, Ile-13, Arg-37, Gln-38, and Asn-124 each coordinate NADPH. Lys-125 serves as a coordination point for 1-deoxy-D-xylulose 5-phosphate. Position 126 (Glu-126) interacts with NADPH. Asp-150 is a Mn(2+) binding site. Positions 151, 152, 179, and 202 each coordinate 1-deoxy-D-xylulose 5-phosphate. Residue Glu-152 participates in Mn(2+) binding. Gly-208 contacts NADPH. Residues Ser-215, Asn-220, Lys-221, and Glu-224 each contribute to the 1-deoxy-D-xylulose 5-phosphate site. Glu-224 serves as a coordination point for Mn(2+).

The protein belongs to the DXR family. Mg(2+) is required as a cofactor. It depends on Mn(2+) as a cofactor.

The enzyme catalyses 2-C-methyl-D-erythritol 4-phosphate + NADP(+) = 1-deoxy-D-xylulose 5-phosphate + NADPH + H(+). It participates in isoprenoid biosynthesis; isopentenyl diphosphate biosynthesis via DXP pathway; isopentenyl diphosphate from 1-deoxy-D-xylulose 5-phosphate: step 1/6. Its function is as follows. Catalyzes the NADPH-dependent rearrangement and reduction of 1-deoxy-D-xylulose-5-phosphate (DXP) to 2-C-methyl-D-erythritol 4-phosphate (MEP). This chain is 1-deoxy-D-xylulose 5-phosphate reductoisomerase, found in Cupriavidus pinatubonensis (strain JMP 134 / LMG 1197) (Cupriavidus necator (strain JMP 134)).